A 274-amino-acid chain; its full sequence is Large ribosomal subunit protein uL2cz/uL2cy (274 aa).

Disordered stretches follow at residues 1–25 (MAIHLYKTSTPSTRNGAVDSQVKSN) and 223–274 (MNPV…RRTK).

The protein belongs to the universal ribosomal protein uL2 family. Part of the 50S ribosomal subunit.

It localises to the plastid. It is found in the chloroplast. The sequence is that of Large ribosomal subunit protein uL2cz/uL2cy (rpl2-A) from Citrus sinensis (Sweet orange).